The sequence spans 630 residues: Amino acid transporter heavy chain SLC3A2 (630 aa).

Met1 is modified (N-acetylmethionine). Glu2 bears the N-acetylserine mark. Glu2 is subject to Phosphoserine. The disordered stretch occupies residues Ile15–Leu39. At Met102–Ala184 the chain is on the cytoplasmic side. Ser103 is modified (phosphoserine). A Phosphothreonine modification is found at Thr106. Ser134 carries the phosphoserine modification. A Glycyl lysine isopeptide (Lys-Gly) (interchain with G-Cter in ubiquitin) cross-link involves residue Lys147. Ser165 is modified (phosphoserine). Residue Lys166 forms a Glycyl lysine isopeptide (Lys-Gly) (interchain with G-Cter in SUMO2) linkage. The helical; Signal-anchor for type II membrane protein transmembrane segment at Leu185 to Val205 threads the bilayer. Topologically, residues Arg206–Ala630 are extracellular. Residues Asn365 and Asn381 are each glycosylated (N-linked (GlcNAc...) asparagine). Residues Ser406, Ser408, and Ser410 each carry the phosphoserine modification. The N-linked (GlcNAc...) (complex) asparagine glycan is linked to Asn424. Asn506 carries N-linked (GlcNAc...) asparagine glycosylation. Ser527 and Ser531 each carry phosphoserine.

In terms of assembly, disulfide-linked heterodimer with a non-glycosylated catalytic light subunit (SLC7A5, SLC7A6, SLC7A7, SLC7A8, SLC7A10 or SLC7A11). Interacts with TLCD3A/CT120. Interacts with ICAM1. Constitutively and specifically associates with beta-1 integrins (alpha-2/beta-1, alpha-3/beta-1, alpha-5/beta-1 and alpha-6/beta-1), but minimally with alpha-4/beta-1. Interacts with LAPTM4B; recruits SLC3A2 and SLC7A5/LAT1 to lysosomes to promote leucine uptake into these organelles and is required for mTORC1 activation. As to quaternary structure, (Microbial infection) Interacts with hepatitis C virus/HCV envelope glycoprotein E2; the interaction may facilitate viral entry into host cell. N-glycosylated; N-glycosylation is crucial for trafficking and stability of SLC3A2 to the plasma membrane. Post-translationally, phosphorylation on Ser-406; Ser-408 or Ser-410 and on Ser-527 or Ser-531 by ecto-protein kinases favors heterotypic cell-cell interactions. As to expression, expressed ubiquitously in all tissues tested with highest levels detected in kidney, placenta and testis and weakest level in thymus. During gestation, expression in the placenta was significantly stronger at full-term than at the mid-trimester stage. Expressed in HUVECS and at low levels in resting peripheral blood T-lymphocytes and quiescent fibroblasts. Also expressed in fetal liver and in the astrocytic process of primary astrocytic gliomas. Expressed in retinal endothelial cells and in the intestinal epithelial cell line C2BBe1.

The protein localises to the apical cell membrane. Its subcellular location is the cell membrane. The protein resides in the cell junction. It is found in the lysosome membrane. It localises to the melanosome. The protein localises to the basolateral cell membrane. Acts as a chaperone that facilitates biogenesis and trafficking of functional transporters heterodimers to the plasma membrane. Forms heterodimer with SLC7 family transporters (SLC7A5, SLC7A6, SLC7A7, SLC7A8, SLC7A10 and SLC7A11), a group of amino-acid antiporters. Heterodimers function as amino acids exchangers, the specificity of the substrate depending on the SLC7A subunit. Heterodimers SLC3A2/SLC7A6 or SLC3A2/SLC7A7 mediate the uptake of dibasic amino acids. Heterodimer SLC3A2/SLC7A11 functions as an antiporter by mediating the exchange of extracellular anionic L-cystine and intracellular L-glutamate across the cellular plasma membrane. SLC3A2/SLC7A10 translocates small neutral L- and D-amino acids across the plasma membrane. SLC3A2/SLC75 or SLC3A2/SLC7A8 translocates neutral amino acids with broad specificity, thyroid hormones and L-DOPA. SLC3A2 is essential for plasma membrane localization, stability, and the transport activity of SLC7A5 and SLC7A8. When associated with LAPTM4B, the heterodimer SLC7A5 is recruited to lysosomes to promote leucine uptake into these organelles, and thereby mediates mTORC1 activation. Modulates integrin-related signaling and is essential for integrin-dependent cell spreading, migration and tumor progression. Its function is as follows. (Microbial infection) In case of hepatitis C virus/HCV infection, the complex formed by SLC3A2 and SLC7A5/LAT1 plays a role in HCV propagation by facilitating viral entry into host cell and increasing L-leucine uptake-mediated mTORC1 signaling activation, thereby contributing to HCV-mediated pathogenesis. Functionally, (Microbial infection) Acts as a receptor for malaria parasite Plasmodium vivax (Thai isolate) in immature red blood cells. The protein is Amino acid transporter heavy chain SLC3A2 of Homo sapiens (Human).